We begin with the raw amino-acid sequence, 1071 residues long: Carbamoyl phosphate synthase large chain (1071 aa).

Positions 1 to 399 are carboxyphosphate synthetic domain; that stretch reads MPKREDIKKV…SLLKAFKSLD (399 aa). The ATP site is built by Arg-129, Arg-169, Gly-175, Gly-176, Glu-208, Val-210, Glu-215, Gly-241, Val-242, His-243, Gln-284, and Glu-296. Residues 133–325 form the ATP-grasp 1 domain; that stretch reads KETMLRIGEK…IARVTAKIAI (193 aa). Mg(2+)-binding residues include Gln-284, Glu-296, and Asn-298. Mn(2+) contacts are provided by Gln-284, Glu-296, and Asn-298. The interval 400–540 is oligomerization domain; that stretch reads IDNQLGNKHW…YSTYEDSCET (141 aa). Positions 541-932 are carbamoyl phosphate synthetic domain; it reads NATTDKKKIL…YKAELAADNV (392 aa). Residues 673 to 864 form the ATP-grasp 2 domain; it reads YILMKELGVP…LAKIAAKVIA (192 aa). Residues Arg-709, Asp-748, Leu-750, Glu-755, Gly-780, Val-781, His-782, Ser-783, Gln-823, and Glu-835 each coordinate ATP. Mg(2+) is bound by residues Gln-823, Glu-835, and Asn-837. Residues Gln-823, Glu-835, and Asn-837 each coordinate Mn(2+). The MGS-like domain occupies 931 to 1071; it reads NVLPLTGKVF…INEYHKEMEN (141 aa). Positions 933-1071 are allosteric domain; it reads LPLTGKVFLS…INEYHKEMEN (139 aa).

This sequence belongs to the CarB family. In terms of assembly, composed of two chains; the small (or glutamine) chain promotes the hydrolysis of glutamine to ammonia, which is used by the large (or ammonia) chain to synthesize carbamoyl phosphate. Tetramer of heterodimers (alpha,beta)4. Requires Mg(2+) as cofactor. The cofactor is Mn(2+).

It catalyses the reaction hydrogencarbonate + L-glutamine + 2 ATP + H2O = carbamoyl phosphate + L-glutamate + 2 ADP + phosphate + 2 H(+). The catalysed reaction is hydrogencarbonate + NH4(+) + 2 ATP = carbamoyl phosphate + 2 ADP + phosphate + 2 H(+). Its pathway is amino-acid biosynthesis; L-arginine biosynthesis; carbamoyl phosphate from bicarbonate: step 1/1. The protein operates within pyrimidine metabolism; UMP biosynthesis via de novo pathway; (S)-dihydroorotate from bicarbonate: step 1/3. In terms of biological role, large subunit of the glutamine-dependent carbamoyl phosphate synthetase (CPSase). CPSase catalyzes the formation of carbamoyl phosphate from the ammonia moiety of glutamine, carbonate, and phosphate donated by ATP, constituting the first step of 2 biosynthetic pathways, one leading to arginine and/or urea and the other to pyrimidine nucleotides. The large subunit (synthetase) binds the substrates ammonia (free or transferred from glutamine from the small subunit), hydrogencarbonate and ATP and carries out an ATP-coupled ligase reaction, activating hydrogencarbonate by forming carboxy phosphate which reacts with ammonia to form carbamoyl phosphate. The chain is Carbamoyl phosphate synthase large chain from Methanosarcina barkeri (strain Fusaro / DSM 804).